The following is a 489-amino-acid chain: Protein-export membrane protein SecD (489 aa).

Helical transmembrane passes span valine 17 to alanine 37, phenylalanine 328 to valine 348, serine 356 to alanine 376, leucine 384 to isoleucine 404, leucine 428 to methionine 448, and leucine 450 to phenylalanine 470.

It belongs to the SecD/SecF family. SecD subfamily. Part of the protein translocation apparatus. Forms a complex with SecF.

It is found in the cell membrane. Involved in protein export. The polypeptide is Protein-export membrane protein SecD (Methanolacinia petrolearia (strain DSM 11571 / OCM 486 / SEBR 4847) (Methanoplanus petrolearius)).